The chain runs to 436 residues: uncharacterized protein (436 aa).

This is an uncharacterized protein from Diadromus pulchellus (Parasitic wasp).